A 331-amino-acid chain; its full sequence is Homoserine O-succinyltransferase (331 aa).

The active-site Acyl-thioester intermediate is the Cys-141. Substrate is bound by residues Lys-162 and Ser-190. His-233 acts as the Proton acceptor in catalysis. Residue Glu-235 is part of the active site. Residue Arg-247 coordinates substrate.

It belongs to the MetA family.

The protein resides in the cytoplasm. The catalysed reaction is L-homoserine + succinyl-CoA = O-succinyl-L-homoserine + CoA. It participates in amino-acid biosynthesis; L-methionine biosynthesis via de novo pathway; O-succinyl-L-homoserine from L-homoserine: step 1/1. Functionally, transfers a succinyl group from succinyl-CoA to L-homoserine, forming succinyl-L-homoserine. This is Homoserine O-succinyltransferase from Methylorubrum extorquens (strain DSM 6343 / CIP 106787 / DM4) (Methylobacterium extorquens).